The chain runs to 338 residues: RNA 3'-terminal phosphate cyclase (338 aa).

Residues Gln-103 and 283–287 (YLADQ) contribute to the ATP site. His-308 serves as the catalytic Tele-AMP-histidine intermediate.

It belongs to the RNA 3'-terminal cyclase family. Type 1 subfamily.

It localises to the cytoplasm. The enzyme catalyses a 3'-end 3'-phospho-ribonucleotide-RNA + ATP = a 3'-end 2',3'-cyclophospho-ribonucleotide-RNA + AMP + diphosphate. Its function is as follows. Catalyzes the conversion of 3'-phosphate to a 2',3'-cyclic phosphodiester at the end of RNA. The mechanism of action of the enzyme occurs in 3 steps: (A) adenylation of the enzyme by ATP; (B) transfer of adenylate to an RNA-N3'P to produce RNA-N3'PP5'A; (C) and attack of the adjacent 2'-hydroxyl on the 3'-phosphorus in the diester linkage to produce the cyclic end product. The biological role of this enzyme is unknown but it is likely to function in some aspects of cellular RNA processing. This chain is RNA 3'-terminal phosphate cyclase, found in Escherichia coli (strain SMS-3-5 / SECEC).